The chain runs to 913 residues: Clumping factor B (913 aa).

The signal sequence occupies residues 1-44 (MKKRIDYLSNKQNKYSIRRFTVGTTSVIVGATILFGIGNHQAQA). A YSIRK-G/S signaling motif motif is present at residues 15 to 26 (YSIRRFTVGTTS). 2 stretches are compositionally biased toward polar residues: residues 44-61 (ASEQ…NASA) and 68-95 (MIET…NVDS). A disordered region spans residues 44 to 192 (ASEQSNDTTQ…QGTSKPSVRT (149 aa)). Residues 45 to 542 (SEQSNDTTQS…GSADGDSAVN (498 aa)) are ligand binding A region. The segment covering 96–119 (TTKPMSTQTSNTTTTEPASTNETP) has biased composition (low complexity). Residues 120 to 189 (QPTAIKNQAT…SNAQGTSKPS (70 aa)) are compositionally biased toward polar residues. The MIDAS-like motif signature appears at 272-276 (DYSNS). The tract at residues 530 to 885 (YGGGSADGDS…ETGDKSENTN (356 aa)) is disordered. Pro residues predominate over residues 545–555 (DPTPGPPVDPE). Residues 556–837 (PSPDPEPEPT…SDSDSDSDSD (282 aa)) show a composition bias toward acidic residues. A compositionally biased stretch (polar residues) spans 841–852 (RVTPPNNEQKAP). Residues 869-882 (HKTDALPETGDKSE) are compositionally biased toward basic and acidic residues. Positions 874-878 (LPETG) match the LPXTG sorting signal motif. T877 is modified (pentaglycyl murein peptidoglycan amidated threonine). Residues 878–913 (GDKSENTNATLFGAMMALLGSLLLFRKRKQDHKEKA) constitute a propeptide, removed by sortase.

It belongs to the serine-aspartate repeat-containing protein (SDr) family. Proteolytically cleaved by aureolysin (aur). This cleavage leads to the inactivation of ClfB.

Its subcellular location is the secreted. The protein resides in the cell wall. Functionally, cell surface-associated protein implicated in virulence by promoting bacterial attachment to both alpha- and beta-chains of human fibrinogen and inducing the formation of bacterial clumps. This Staphylococcus aureus (strain COL) protein is Clumping factor B (clfB).